Consider the following 252-residue polypeptide: Mediator of RNA polymerase II transcription subunit 4 (252 aa).

2 coiled-coil regions span residues 5–31 (KKSTKERLESLLDDLEVLSREVIETLA) and 70–112 (KTHQ…QAKE). The interval 213–252 (MLPPNHSNEFLMESLGPNKENEEDVEVMSTDSSSSSSDSD) is disordered. Residues 241 to 252 (STDSSSSSSDSD) show a composition bias toward low complexity.

Belongs to the Mediator complex subunit 4 family. In terms of assembly, component of the Mediator complex.

It is found in the nucleus. In terms of biological role, component of the Mediator complex, a coactivator involved in the regulated transcription of nearly all RNA polymerase II-dependent genes. Mediator functions as a bridge to convey information from gene-specific regulatory proteins to the basal RNA polymerase II transcription machinery. Mediator is recruited to promoters by direct interactions with regulatory proteins and serves as a scaffold for the assembly of a functional preinitiation complex with RNA polymerase II and the general transcription factors. The chain is Mediator of RNA polymerase II transcription subunit 4 (med4) from Xenopus laevis (African clawed frog).